A 147-amino-acid chain; its full sequence is MAGGKSPKGMFAARKLRLKRLKFRWHQRKFKRRMLKLKEKFDPLEGAPMARGVVLEKVGIESRQPNSAVRKAVRVQLVKNGRIVTAFVPGDGGVNFIDEHDEVVIAGIGGTLGRSMGDLPGVRYKVIMVNGVSLDALYKGKKQKPVR.

Belongs to the universal ribosomal protein uS12 family. Part of the 30S ribosomal subunit.

With S4 and S5 plays an important role in translational accuracy. Located at the interface of the 30S and 50S subunits. The chain is Small ribosomal subunit protein uS12 from Sulfurisphaera tokodaii (strain DSM 16993 / JCM 10545 / NBRC 100140 / 7) (Sulfolobus tokodaii).